Consider the following 214-residue polypeptide: Transmembrane emp24 domain-containing protein p24delta9 (214 aa).

The first 24 residues, 1-24 (MFLRSLNLCTILLFLAISSQVSQS), serve as a signal peptide directing secretion. At 25 to 181 (LHFELQSGRT…QNLNRATNSK (157 aa)) the chain is on the lumenal side. The region spanning 34 to 149 (TKCISEDIKS…VEVMEFDVKR (116 aa)) is the GOLD domain. The stretch at 164-177 (LREREEEMQNLNRA) forms a coiled coil. Arg167 is subject to Omega-N-methylated arginine. A helical transmembrane segment spans residues 182-202 (MAWLSFLSLFVCLGVAGMQFV). The Cytoplasmic segment spans residues 203-214 (HLKTFFEKKKVI). Residues 207–208 (FF) carry the COPII vesicle coat-binding motif. A COPI vesicle coat-binding motif is present at residues 207-214 (FFEKKKVI).

Belongs to the EMP24/GP25L family. As to quaternary structure, probably oligomerizes with other members of the EMP24/GP25L family. Associates with the COPI vesicle coat (coatomer). Associates with the COPII vesicle coat (coatomer).

It is found in the endoplasmic reticulum membrane. The protein resides in the golgi apparatus. It localises to the cis-Golgi network membrane. Its subcellular location is the golgi stack membrane. Functionally, involved in vesicular protein trafficking. Mainly functions in the early secretory pathway. Thought to act as cargo receptor at the lumenal side for incorporation of secretory cargo molecules into transport vesicles and to be involved in vesicle coat formation at the cytoplasmic side. This Arabidopsis thaliana (Mouse-ear cress) protein is Transmembrane emp24 domain-containing protein p24delta9.